A 485-amino-acid chain; its full sequence is N-succinylglutamate 5-semialdehyde dehydrogenase (485 aa).

NAD(+) is bound at residue 220 to 225; that stretch reads GSANTG. Catalysis depends on residues Glu-243 and Cys-278.

This sequence belongs to the aldehyde dehydrogenase family. AstD subfamily.

It catalyses the reaction N-succinyl-L-glutamate 5-semialdehyde + NAD(+) + H2O = N-succinyl-L-glutamate + NADH + 2 H(+). It functions in the pathway amino-acid degradation; L-arginine degradation via AST pathway; L-glutamate and succinate from L-arginine: step 4/5. In terms of biological role, catalyzes the NAD-dependent reduction of succinylglutamate semialdehyde into succinylglutamate. The protein is N-succinylglutamate 5-semialdehyde dehydrogenase of Vibrio atlanticus (strain LGP32) (Vibrio splendidus (strain Mel32)).